The chain runs to 180 residues: Ribulose bisphosphate carboxylase small subunit, chloroplastic 2 (180 aa).

A chloroplast-targeting transit peptide spans 1-56; that stretch reads MASSVMSSAAVATSTNAAQASMVAPFTGLKSAASFPVSRKQNLDITSIASNGGRVQ.

This sequence belongs to the RuBisCO small chain family. Heterohexadecamer of 8 large and 8 small subunits.

Its subcellular location is the plastid. It is found in the chloroplast. In terms of biological role, ruBisCO catalyzes two reactions: the carboxylation of D-ribulose 1,5-bisphosphate, the primary event in carbon dioxide fixation, as well as the oxidative fragmentation of the pentose substrate. Both reactions occur simultaneously and in competition at the same active site. Although the small subunit is not catalytic it is essential for maximal activity. The protein is Ribulose bisphosphate carboxylase small subunit, chloroplastic 2 of Petunia hybrida (Petunia).